The chain runs to 523 residues: 2-isopropylmalate synthase (523 aa).

Positions 5-267 constitute a Pyruvate carboxyltransferase domain; that stretch reads VIIFDTTLRD…HTAINHQEIW (263 aa). Residues Asp-14, His-202, His-204, and Asn-238 each coordinate Mn(2+). Residues 392-523 are regulatory domain; it reads RLDYFSVQSG…QHNENNKETV (132 aa).

The protein belongs to the alpha-IPM synthase/homocitrate synthase family. LeuA type 1 subfamily. Homodimer. Mn(2+) serves as cofactor.

Its subcellular location is the cytoplasm. It catalyses the reaction 3-methyl-2-oxobutanoate + acetyl-CoA + H2O = (2S)-2-isopropylmalate + CoA + H(+). It functions in the pathway amino-acid biosynthesis; L-leucine biosynthesis; L-leucine from 3-methyl-2-oxobutanoate: step 1/4. In terms of biological role, catalyzes the condensation of the acetyl group of acetyl-CoA with 3-methyl-2-oxobutanoate (2-ketoisovalerate) to form 3-carboxy-3-hydroxy-4-methylpentanoate (2-isopropylmalate). The sequence is that of 2-isopropylmalate synthase from Escherichia coli O127:H6 (strain E2348/69 / EPEC).